Reading from the N-terminus, the 29-residue chain is Beta-theraphotoxin-Gr1a (29 aa).

3 cysteine pairs are disulfide-bonded: Cys2/Cys16, Cys9/Cys21, and Cys15/Cys25.

It belongs to the neurotoxin 30 (phrixotoxin) family. In terms of tissue distribution, expressed by the venom gland.

It is found in the secreted. Its function is as follows. Inhibits voltage-gated sodium channels Nav1.1/SCN1A (IC(50)=630 nM), Nav1.2/SCN2A (IC(50)=230 nM), Nav1.3/SCN3A (IC(50)=770 nM), Nav1.4/SCN4A (IC(50)=1290 nM), Nav1.6/SCN8A (IC(50)=630 nM), Nav1.7/SCN9A (IC(50)=15.3-1000 nM) and potassium channels Kv11.1/KCNH2 (IC(50)=4.2 uM). The chain is Beta-theraphotoxin-Gr1a from Grammostola rosea (Chilean rose tarantula).